Consider the following 271-residue polypeptide: 2-dehydro-3-deoxyphosphooctonate aldolase (271 aa).

Belongs to the KdsA family.

Its subcellular location is the cytoplasm. The enzyme catalyses D-arabinose 5-phosphate + phosphoenolpyruvate + H2O = 3-deoxy-alpha-D-manno-2-octulosonate-8-phosphate + phosphate. The protein operates within carbohydrate biosynthesis; 3-deoxy-D-manno-octulosonate biosynthesis; 3-deoxy-D-manno-octulosonate from D-ribulose 5-phosphate: step 2/3. It functions in the pathway bacterial outer membrane biogenesis; lipopolysaccharide biosynthesis. The protein is 2-dehydro-3-deoxyphosphooctonate aldolase of Campylobacter jejuni subsp. jejuni serotype O:23/36 (strain 81-176).